A 359-amino-acid polypeptide reads, in one-letter code: MGSRTPLYEAHVKAGAKMVDFHGWDMPLNYGSQIEEHHAVRRDCGVFDVSHMTIVDVEGSQAQAFLRYLLANDVAKLKTEGKAQYTSMLNENGGVIDDLIVYFFSENAYRMVVNSATRDRDLAWIEKVAADFDVTTKERDDMGMLALQGPKAADKIQGVLTAEQYAEIDGMKPFVGKDVGDYFIATTGYTGEKGYEIVVPAEQLEALWNDLLKADVAPCGLGARDTLRLEAGMNLYGQDMDENITPLEANMGWSVAFEPADRDFIGRKALEQKKAEGHDKLVGLVMEEKGVLRHGQKVTVEGGEGIITSGTFSPTLGFSVAMARVPSSVGDTAEVEMRKKQMPVKVVKPGFVRNGQSVL.

It belongs to the GcvT family. In terms of assembly, the glycine cleavage system is composed of four proteins: P, T, L and H.

The catalysed reaction is N(6)-[(R)-S(8)-aminomethyldihydrolipoyl]-L-lysyl-[protein] + (6S)-5,6,7,8-tetrahydrofolate = N(6)-[(R)-dihydrolipoyl]-L-lysyl-[protein] + (6R)-5,10-methylene-5,6,7,8-tetrahydrofolate + NH4(+). The glycine cleavage system catalyzes the degradation of glycine. The protein is Aminomethyltransferase of Idiomarina loihiensis (strain ATCC BAA-735 / DSM 15497 / L2-TR).